A 737-amino-acid chain; its full sequence is Relaxin receptor 2 (737 aa).

Over 1-399 (MWLLLHVILL…SSSEDLLANG (399 aa)) the chain is Extracellular. The 38-residue stretch at 27 to 64 (LCPKGYFPCGNLTKCLPRAFHCDGVDDCGNGADEDNCG) folds into the LDL-receptor class A domain. 3 disulfide bridges follow: cysteine 28/cysteine 41, cysteine 35/cysteine 54, and cysteine 48/cysteine 63. N-linked (GlcNAc...) asparagine glycosylation occurs at asparagine 37. N-linked (GlcNAc...) asparagine glycosylation is present at asparagine 121. 10 LRR repeats span residues 121–142 (NVTLLSLKKNKIHRLPVKVFSR), 145–166 (ELRKIYLQHNCITHISRRAFLG), 169–190 (NLQILYLSHNCITSLRPGIFKD), 193–214 (QLAWLILDDNPITRISQKSFMG), 217–238 (SLFFLSMVGNRLEALPETLCAQ), 241–262 (QLNWVDLANNGIKYITNSTFLT), 265–286 (SLTVLFLPRNQIGFVPEKTFSS), 289–310 (NLGELDLSSNMITKLPVHLFSD), 313–334 (LLQKLNLSSNPLLYVHKNQFGS), and 337–358 (QLQSLDLERIEIPNISTGMFQP). N-linked (GlcNAc...) asparagine glycosylation is present at asparagine 257. N-linked (GlcNAc...) asparagine glycosylation is found at asparagine 318, asparagine 350, and asparagine 361. Residues 400 to 420 (ILRVSVWVIAFITCVGNFLVI) form a helical membrane-spanning segment. Over 421–438 (AVRSLIKAENTTHAMSIK) the chain is Cytoplasmic. Residues 439 to 459 (ILCCADCLMGVYLFSVGVFDI) traverse the membrane as a helical segment. Residues 460–478 (KYRGQYQKYALLWMESVPC) lie on the Extracellular side of the membrane. Cysteine 478 and cysteine 556 are joined by a disulfide. A helical membrane pass occupies residues 479–501 (RLLGFLATLSTEVSVLLLTFLTL). Over 502–520 (EKFLVIVFPFSNLRLGKRQ) the chain is Cytoplasmic. Residues 521-541 (TAVALASIWVVGFLIAAVPFT) form a helical membrane-spanning segment. Residues 542–575 (REDYFGNFYGKNGVCFPLHYDQAEDFGSRGYSLG) are Extracellular-facing. Residues 576 to 596 (IFLGVNLLAFLVIVISYVTMF) form a helical membrane-spanning segment. The Cytoplasmic segment spans residues 597–622 (CSIHKTALQTAEVRSHIGKEVAVANR). Residues 623 to 643 (FFFIVFSDAICWIPVFVVKIL) traverse the membrane as a helical segment. Residues 644–653 (SLLQVEIPGT) lie on the Extracellular side of the membrane. The chain crosses the membrane as a helical span at residues 654-674 (ITSWIVVFFLPVNSALNPILY). Residues 675–737 (TLTTSFFKDK…GDSIMKPVSP (63 aa)) lie on the Cytoplasmic side of the membrane.

The protein belongs to the G-protein coupled receptor 1 family. In terms of tissue distribution, expressed in embryonic and adult gonads of males and females, as well in male gubernarculum. Expressed also in brain. Not detected in kidney, spleen and heart.

It localises to the cell membrane. Functionally, receptor for relaxin. The activity of this receptor is mediated by G proteins leading to stimulation of adenylate cyclase and an increase of cAMP. May also be a receptor for Leydig insulin-like peptide (INSL3). The protein is Relaxin receptor 2 (Rxfp2) of Mus musculus (Mouse).